A 241-amino-acid polypeptide reads, in one-letter code: 2-C-methyl-D-erythritol 4-phosphate cytidylyltransferase (241 aa).

Belongs to the IspD/TarI cytidylyltransferase family. IspD subfamily.

The catalysed reaction is 2-C-methyl-D-erythritol 4-phosphate + CTP + H(+) = 4-CDP-2-C-methyl-D-erythritol + diphosphate. It participates in isoprenoid biosynthesis; isopentenyl diphosphate biosynthesis via DXP pathway; isopentenyl diphosphate from 1-deoxy-D-xylulose 5-phosphate: step 2/6. Its function is as follows. Catalyzes the formation of 4-diphosphocytidyl-2-C-methyl-D-erythritol from CTP and 2-C-methyl-D-erythritol 4-phosphate (MEP). In Pseudoalteromonas translucida (strain TAC 125), this protein is 2-C-methyl-D-erythritol 4-phosphate cytidylyltransferase.